The sequence spans 823 residues: Protein phosphatase 1 regulatory subunit 29 (823 aa).

The N-terminal stretch at 1-22 (MLRLGLCAAALLCVCQPGAVRA) is a signal peptide. Residues 23–397 (DCWLIEGDKG…APSTSTTTHY (375 aa)) lie on the Extracellular side of the membrane. N-linked (GlcNAc...) asparagine glycosylation is present at N54. LRR repeat units follow at residues 56-77 (TVHD…SLNR), 80-101 (NLTD…AFLG), 104-125 (SLQV…MLRG), 128-149 (RLQF…AFSE), and 152-173 (SLIS…TFAS). 3 N-linked (GlcNAc...) asparagine glycosylation sites follow: N80, N85, and N117. In terms of domain architecture, LRRCT spans 185 to 247 (NPFNCECDLF…ITVLQAKCRN (63 aa)). N-linked (GlcNAc...) asparagine glycans are attached at residues N205 and N247. The disordered stretch occupies residues 249 to 294 (SMPARPVSHPTPYSTDAQREPDENSGFNPDEILSVEPPASSTTDAS). The Fibronectin type-III domain maps to 292–379 (DASAGPAIKL…FNHTCLTFTT (88 aa)). A helical membrane pass occupies residues 398–418 (IMTILGCLFGMVIVLGAVYYC). The Cytoplasmic portion of the chain corresponds to 419-823 (LRKRRMQEEK…WKGVSAQQKL (405 aa)). A disordered region spans residues 590 to 624 (ASSAATPGALERPSFLSPPYKESSHHPLQRQLSAD). Phosphoserine occurs at positions 622, 671, and 675.

In terms of assembly, interacts with PPP1CA.

It localises to the membrane. Inhibits phosphatase activity of protein phosphatase 1 (PP1) complexes. The protein is Protein phosphatase 1 regulatory subunit 29 (Elfn2) of Mus musculus (Mouse).